The sequence spans 434 residues: Tol-Pal system protein TolB (434 aa).

The signal sequence occupies residues 1-21 (MIVRRALALAALALAASPALA). The segment at 411 to 434 (GDRQTPVTSGKTDLAAPAWGPLAP) is disordered.

Belongs to the TolB family. As to quaternary structure, the Tol-Pal system is composed of five core proteins: the inner membrane proteins TolA, TolQ and TolR, the periplasmic protein TolB and the outer membrane protein Pal. They form a network linking the inner and outer membranes and the peptidoglycan layer.

The protein resides in the periplasm. Part of the Tol-Pal system, which plays a role in outer membrane invagination during cell division and is important for maintaining outer membrane integrity. The sequence is that of Tol-Pal system protein TolB from Anaeromyxobacter dehalogenans (strain 2CP-C).